The chain runs to 216 residues: Urease accessory protein UreG (216 aa).

Residue 24 to 31 participates in GTP binding; the sequence is GPVGSGKT.

The protein belongs to the SIMIBI class G3E GTPase family. UreG subfamily. As to quaternary structure, homodimer. UreD, UreF and UreG form a complex that acts as a GTP-hydrolysis-dependent molecular chaperone, activating the urease apoprotein by helping to assemble the nickel containing metallocenter of UreC. The UreE protein probably delivers the nickel.

It localises to the cytoplasm. Its function is as follows. Facilitates the functional incorporation of the urease nickel metallocenter. This process requires GTP hydrolysis, probably effectuated by UreG. The sequence is that of Urease accessory protein UreG from Variovorax paradoxus (strain S110).